Reading from the N-terminus, the 254-residue chain is MAAPRAFLHLGAREWHGRARGTHSMSGLATPDSNREKKRTLLQFLSDHFHDVQTLREYLLQKQISKVSMENRSYRKIQERYGPYITGAQFILKQGGAVKFQGRDWIRPNDRGHSIAELQKVPVEAVDASGCAINYQGLSNLLPLKELQFLSLQRCPNLDDWCLSRLYLLAGSLQELSLAGCPRISERGLACLHHLQNLRRLDISDLPAVSHPGLTQILVEEMLPHCEVLGVDWAKSLKLGPDDQPPDTSSPLSS.

Ser250 is subject to Phosphoserine.

It belongs to the ATP synthase subunit s family. In terms of assembly, interacts with incompletely assembled mitochondrial NADH:ubiquinone oxidoreductase complex (complex I).

Its subcellular location is the mitochondrion. Its function is as follows. Required for the assembly of the mitochondrial NADH:ubiquinone oxidoreductase complex (complex I). Involved in the assembly of the distal region of complex I. This chain is Distal membrane-arm assembly complex protein 2, found in Rattus norvegicus (Rat).